The primary structure comprises 357 residues: Beta-hexosaminidase (357 aa).

Residues Asp66, Arg74, Arg140, and 170-171 contribute to the substrate site; that span reads KH. Catalysis depends on His183, which acts as the Proton donor/acceptor. The active-site Nucleophile is Asp254.

Belongs to the glycosyl hydrolase 3 family. NagZ subfamily.

It localises to the cytoplasm. It catalyses the reaction Hydrolysis of terminal non-reducing N-acetyl-D-hexosamine residues in N-acetyl-beta-D-hexosaminides.. Its pathway is cell wall biogenesis; peptidoglycan recycling. Functionally, plays a role in peptidoglycan recycling by cleaving the terminal beta-1,4-linked N-acetylglucosamine (GlcNAc) from peptide-linked peptidoglycan fragments, giving rise to free GlcNAc, anhydro-N-acetylmuramic acid and anhydro-N-acetylmuramic acid-linked peptides. This Chromobacterium violaceum (strain ATCC 12472 / DSM 30191 / JCM 1249 / CCUG 213 / NBRC 12614 / NCIMB 9131 / NCTC 9757 / MK) protein is Beta-hexosaminidase.